A 357-amino-acid polypeptide reads, in one-letter code: Prostaglandin D2 receptor (357 aa).

The Extracellular portion of the chain corresponds to 1-20 (MNESYRCQTSTWVERGSSAT). A glycan (N-linked (GlcNAc...) asparagine) is linked at Asn-2. The chain crosses the membrane as a helical span at residues 21–41 (MGAVLFGAGLLGNLLALVLLA). Residues 42–58 (RSGLGSCRPGPLHPPPS) lie on the Cytoplasmic side of the membrane. A helical transmembrane segment spans residues 59 to 79 (VFYVLVCGLTVTDLLGKCLIS). At 80–106 (PMVLAAYAQNQSLKELLPASGNQLCET) the chain is on the extracellular side. Asn-89 is a glycosylation site (N-linked (GlcNAc...) asparagine). Cys-104 and Cys-182 are oxidised to a cystine. The helical transmembrane segment at 107-127 (FAFLMSFFGLASTLQLLAMAV) threads the bilayer. Residues 128–149 (ECWLSLGHPFFYQRHVTLRRGV) are Cytoplasmic-facing. The chain crosses the membrane as a helical span at residues 150–170 (LVAPVVAAFCLAFCALPFAGF). The Extracellular segment spans residues 171-194 (GKFVQYCPGTWCFIQMIHKERSFS). A helical transmembrane segment spans residues 195–215 (VIGFSVLYSSLMALLVLATVV). The Cytoplasmic portion of the chain corresponds to 216–261 (CNLGAMYNLYDMHRRQRHYPHRCSRDRAQSGSDYRHGSLHPLEELD). The chain crosses the membrane as a helical span at residues 262–282 (HFVLLALMTVLFTMCSLPLIY). At 283–306 (RAYYGAFKLENKAEGDSEDLQALR) the chain is on the extracellular side. The helical transmembrane segment at 307 to 327 (FLSVISIVDPWIFIIFRTSVF) threads the bilayer. The Cytoplasmic portion of the chain corresponds to 328–357 (RMLFHKVFTRPLIYRNWSSHSQQSNVESTL).

This sequence belongs to the G-protein coupled receptor 1 family. As to expression, most abundantly expressed in the ileum, followed by lung, stomach and uterus.

The protein localises to the cell membrane. Functionally, receptor for prostaglandin D2 (PGD2). The activity of this receptor is mainly mediated by G(s) proteins that stimulate adenylate cyclase, resulting in an elevation of intracellular cAMP. A mobilization of calcium is also observed, but without formation of inositol 1,4,5-trisphosphate. Involved in PLA2G3-dependent maturation of mast cells. PLA2G3 is secreted by immature mast cells and acts on nearby fibroblasts upstream to PTDGS to synthesize PGD2, which in turn promotes mast cell maturation and degranulation via PTGDR. The sequence is that of Prostaglandin D2 receptor (Ptgdr) from Mus musculus (Mouse).